The chain runs to 173 residues: Crossover junction endodeoxyribonuclease RuvC (173 aa).

Catalysis depends on residues Asp-8, Glu-67, and Asp-139. Positions 8, 67, and 139 each coordinate Mg(2+).

This sequence belongs to the RuvC family. As to quaternary structure, homodimer which binds Holliday junction (HJ) DNA. The HJ becomes 2-fold symmetrical on binding to RuvC with unstacked arms; it has a different conformation from HJ DNA in complex with RuvA. In the full resolvosome a probable DNA-RuvA(4)-RuvB(12)-RuvC(2) complex forms which resolves the HJ. It depends on Mg(2+) as a cofactor.

The protein localises to the cytoplasm. It carries out the reaction Endonucleolytic cleavage at a junction such as a reciprocal single-stranded crossover between two homologous DNA duplexes (Holliday junction).. Functionally, the RuvA-RuvB-RuvC complex processes Holliday junction (HJ) DNA during genetic recombination and DNA repair. Endonuclease that resolves HJ intermediates. Cleaves cruciform DNA by making single-stranded nicks across the HJ at symmetrical positions within the homologous arms, yielding a 5'-phosphate and a 3'-hydroxyl group; requires a central core of homology in the junction. The consensus cleavage sequence is 5'-(A/T)TT(C/G)-3'. Cleavage occurs on the 3'-side of the TT dinucleotide at the point of strand exchange. HJ branch migration catalyzed by RuvA-RuvB allows RuvC to scan DNA until it finds its consensus sequence, where it cleaves and resolves the cruciform DNA. The polypeptide is Crossover junction endodeoxyribonuclease RuvC (Aliivibrio fischeri (strain ATCC 700601 / ES114) (Vibrio fischeri)).